Consider the following 216-residue polypeptide: A-type ATP synthase subunit D (216 aa).

It belongs to the V-ATPase D subunit family. Has multiple subunits with at least A(3), B(3), C, D, E, F, H, I and proteolipid K(x). In terms of processing, the N-terminus is blocked.

It is found in the cell membrane. Component of the A-type ATP synthase that produces ATP from ADP in the presence of a proton gradient across the membrane. The protein is A-type ATP synthase subunit D of Sulfurisphaera tokodaii (strain DSM 16993 / JCM 10545 / NBRC 100140 / 7) (Sulfolobus tokodaii).